We begin with the raw amino-acid sequence, 355 residues long: DNA-directed RNA polymerase subunit alpha (355 aa).

The alpha N-terminal domain (alpha-NTD) stretch occupies residues 1–233 (MVREKVRVST…DLFIPFLHKE (233 aa)). Residues 268–355 (KKKIALKSIF…EIYCYSIFFH (88 aa)) form an alpha C-terminal domain (alpha-CTD) region.

Belongs to the RNA polymerase alpha chain family. In terms of assembly, in plastids the minimal PEP RNA polymerase catalytic core is composed of four subunits: alpha, beta, beta', and beta''. When a (nuclear-encoded) sigma factor is associated with the core the holoenzyme is formed, which can initiate transcription.

The protein localises to the plastid. It localises to the chloroplast. It catalyses the reaction RNA(n) + a ribonucleoside 5'-triphosphate = RNA(n+1) + diphosphate. DNA-dependent RNA polymerase catalyzes the transcription of DNA into RNA using the four ribonucleoside triphosphates as substrates. This chain is DNA-directed RNA polymerase subunit alpha, found in Jasminum nudiflorum (Winter jasmine).